We begin with the raw amino-acid sequence, 479 residues long: MTTFVDRVELHVAAGSGGHGCASVHREKFKPLGGPDGGNGGRGGDVILVVDQSVTTLLDYHHKPHRSATNGKPGEGGNRSGKDGQDLILPVPDGTVIQDKAGNVLADLVGHGTSYVAAQGGRGGLGNAALASARRKAPGFALLGEPGDFQDIVLELKTVADVALVGYPSAGKSSLISVLSAAKPKIADYPFTTLVPNLGVVTAGSTVYTIADVPGLIPGASQGKGLGLEFLRHVERCSVLVHVLDTATLESDRDPVSDLDIIEEELTQYGGGLNNRPRMVVLNKIDVPDGKDLAEMVRPELEARGYRVFEVSAVAHMGLKELSFALAELVGAARAAKPKEEATRIVIRPKAVDDAGFTVVLEEDGLYRVRGEKPERWVRQTDFNNDEAVGYLADRLNRLGVETELMKAGARAGDGVAIGPEDNAVVFDWEPTVMAGAEMLGRRGEDHRLDEPRPAAQRRRDKQAERDDAEKEYDDFEPF.

The Obg domain maps to 2–159; the sequence is TTFVDRVELH…QDIVLELKTV (158 aa). The tract at residues 61-87 is disordered; the sequence is HHKPHRSATNGKPGEGGNRSGKDGQDL. One can recognise an OBG-type G domain in the interval 160 to 331; sequence ADVALVGYPS…LSFALAELVG (172 aa). GTP-binding positions include 166-173, 191-195, 212-215, 283-286, and 312-314; these read GYPSAGKS, FTTLV, DVPG, NKID, and SAV. 2 residues coordinate Mg(2+): S173 and T193. The region spanning 349 to 431 is the OCT domain; sequence PKAVDDAGFT…DNAVVFDWEP (83 aa). Basic and acidic residues predominate over residues 440 to 453; sequence LGRRGEDHRLDEPR. The segment at 440 to 479 is disordered; that stretch reads LGRRGEDHRLDEPRPAAQRRRDKQAERDDAEKEYDDFEPF. Residues 470–479 are compositionally biased toward acidic residues; it reads EKEYDDFEPF.

This sequence belongs to the TRAFAC class OBG-HflX-like GTPase superfamily. OBG GTPase family. In terms of assembly, monomer. The cofactor is Mg(2+).

The protein resides in the cytoplasm. In terms of biological role, an essential GTPase which binds GTP, GDP and possibly (p)ppGpp with moderate affinity, with high nucleotide exchange rates and a fairly low GTP hydrolysis rate. Plays a role in control of the cell cycle, stress response, ribosome biogenesis and in those bacteria that undergo differentiation, in morphogenesis control. This chain is GTPase Obg, found in Streptomyces avermitilis (strain ATCC 31267 / DSM 46492 / JCM 5070 / NBRC 14893 / NCIMB 12804 / NRRL 8165 / MA-4680).